We begin with the raw amino-acid sequence, 99 residues long: Protein Tat (99 aa).

Residues 1 to 22 form a disordered region; the sequence is MDPVDPNLEPWNHPGSQPRTPC. Residues 1-24 are interaction with human CREBBP; that stretch reads MDPVDPNLEPWNHPGSQPRTPCNK. The interval 1–48 is transactivation; it reads MDPVDPNLEPWNHPGSQPRTPCNKCHCKKCCYHCPVCFLNKGLGISYG. Zn(2+) contacts are provided by Cys22, Cys25, and Cys27. The tract at residues 22 to 37 is cysteine-rich; that stretch reads CNKCHCKKCCYHCPVC. At Lys28 the chain carries N6-acetyllysine; by host PCAF. Residues Cys30, His33, Cys34, and Cys37 each coordinate Zn(2+). The interval 38-48 is core; it reads FLNKGLGISYG. The interval 48–99 is disordered; sequence GRKKRRQRRGPPQGGQAHQVPIPKQPSSQPRGDPTGPKEQKKKVESEAETDP. A Nuclear localization signal, RNA-binding (TAR), and protein transduction motif is present at residues 49–57; the sequence is RKKRRQRRG. Residues 49–86 form an interaction with the host capping enzyme RNGTT region; the sequence is RKKRRQRRGPPQGGQAHQVPIPKQPSSQPRGDPTGPKE. An N6-acetyllysine; by host EP300 and GCN5L2 mark is found at Lys50 and Lys51. An asymmetric dimethylarginine; by host PRMT6 mark is found at Arg52 and Arg53. Lys71 participates in a covalent cross-link: Glycyl lysine isopeptide (Lys-Gly) (interchain with G-Cter in ubiquitin). The Cell attachment site signature appears at 78–80; sequence RGD. A compositionally biased stretch (basic and acidic residues) spans 83 to 93; it reads GPKEQKKKVES.

This sequence belongs to the lentiviruses Tat family. In terms of assembly, interacts with host CCNT1. Associates with the P-TEFb complex composed at least of Tat, P-TEFb (CDK9 and CCNT1), TAR RNA, RNA Pol II. Recruits the HATs CREBBP, TAF1/TFIID, EP300, PCAF and GCN5L2. Interacts with host KAT5/Tip60; this interaction targets the latter to degradation. Interacts with the host deacetylase SIRT1. Interacts with host capping enzyme RNGTT; this interaction stimulates RNGTT. Binds to host KDR, and to the host integrins ITGAV/ITGB3 and ITGA5/ITGB1. Interacts with host KPNB1/importin beta-1 without previous binding to KPNA1/importin alpha-1. Interacts with EIF2AK2. Interacts with host nucleosome assembly protein NAP1L1; this interaction may be required for the transport of Tat within the nucleus, since the two proteins interact at the nuclear rim. Interacts with host C1QBP/SF2P32; this interaction involves lysine-acetylated Tat. Interacts with the host chemokine receptors CCR2, CCR3 and CXCR4. Interacts with host DPP4/CD26; this interaction may trigger an anti-proliferative effect. Interacts with host LDLR. Interacts with the host extracellular matrix metalloproteinase MMP1. Interacts with host PRMT6; this interaction mediates Tat's methylation. Interacts with, and is ubiquitinated by MDM2/Hdm2. Interacts with host PSMC3 and HTATIP2. Interacts with STAB1; this interaction may overcome SATB1-mediated repression of IL2 and IL2RA (interleukin) in T cells by binding to the same domain than HDAC1. Interacts (when acetylated) with human CDK13, thereby increasing HIV-1 mRNA splicing and promoting the production of the doubly spliced HIV-1 protein Nef. Interacts with host TBP; this interaction modulates the activity of transcriptional pre-initiation complex. Interacts with host RELA. Interacts with host PLSCR1; this interaction negatively regulates Tat transactivation activity by altering its subcellular distribution. Asymmetrical arginine methylation by host PRMT6 seems to diminish the transactivation capacity of Tat and affects the interaction with host CCNT1. In terms of processing, acetylation by EP300, CREBBP, GCN5L2/GCN5 and PCAF regulates the transactivation activity of Tat. EP300-mediated acetylation of Lys-50 promotes dissociation of Tat from the TAR RNA through the competitive binding to PCAF's bromodomain. In addition, the non-acetylated Tat's N-terminus can also interact with PCAF. PCAF-mediated acetylation of Lys-28 enhances Tat's binding to CCNT1. Lys-50 is deacetylated by SIRT1. Post-translationally, polyubiquitination by host MDM2 does not target Tat to degradation, but activates its transactivation function and fosters interaction with CCNT1 and TAR RNA. Phosphorylated by EIF2AK2 on serine and threonine residues adjacent to the basic region important for TAR RNA binding and function. Phosphorylation of Tat by EIF2AK2 is dependent on the prior activation of EIF2AK2 by dsRNA.

The protein localises to the host nucleus. It localises to the host nucleolus. It is found in the host cytoplasm. Its subcellular location is the secreted. Its function is as follows. Transcriptional activator that increases RNA Pol II processivity, thereby increasing the level of full-length viral transcripts. Recognizes a hairpin structure at the 5'-LTR of the nascent viral mRNAs referred to as the transactivation responsive RNA element (TAR) and recruits the cyclin T1-CDK9 complex (P-TEFb complex) that will in turn hyperphosphorylate the RNA polymerase II to allow efficient elongation. The CDK9 component of P-TEFb and other Tat-activated kinases hyperphosphorylate the C-terminus of RNA Pol II that becomes stabilized and much more processive. Other factors such as HTATSF1/Tat-SF1, SUPT5H/SPT5, and HTATIP2 are also important for Tat's function. Besides its effect on RNA Pol II processivity, Tat induces chromatin remodeling of proviral genes by recruiting the histone acetyltransferases (HATs) CREBBP, EP300 and PCAF to the chromatin. This also contributes to the increase in proviral transcription rate, especially when the provirus integrates in transcriptionally silent region of the host genome. To ensure maximal activation of the LTR, Tat mediates nuclear translocation of NF-kappa-B by interacting with host RELA. Through its interaction with host TBP, Tat may also modulate transcription initiation. Tat can reactivate a latently infected cell by penetrating in it and transactivating its LTR promoter. In the cytoplasm, Tat is thought to act as a translational activator of HIV-1 mRNAs. Extracellular circulating Tat can be endocytosed by surrounding uninfected cells via the binding to several surface receptors such as CD26, CXCR4, heparan sulfate proteoglycans (HSPG) or LDLR. Neurons are rarely infected, but they internalize Tat via their LDLR. Through its interaction with nuclear HATs, Tat is potentially able to control the acetylation-dependent cellular gene expression. Modulates the expression of many cellular genes involved in cell survival, proliferation or in coding for cytokines or cytokine receptors. Tat plays a role in T-cell and neurons apoptosis. Tat induced neurotoxicity and apoptosis probably contribute to neuroAIDS. Circulating Tat also acts as a chemokine-like and/or growth factor-like molecule that binds to specific receptors on the surface of the cells, affecting many cellular pathways. In the vascular system, Tat binds to ITGAV/ITGB3 and ITGA5/ITGB1 integrins dimers at the surface of endothelial cells and competes with bFGF for heparin-binding sites, leading to an excess of soluble bFGF. The protein is Protein Tat of Homo sapiens (Human).